We begin with the raw amino-acid sequence, 450 residues long: Runt-related transcription factor 1 (450 aa).

Residues 1-25 (MRIPVDASTSRRFTPPSTALSPGKM) form a disordered region. Positions 7 to 20 (ASTSRRFTPPSTAL) are enriched in polar residues. Thr14 is modified (phosphothreonine). A Phosphoserine modification is found at Ser21. An N6-acetyllysine mark is found at Lys24 and Lys43. Residues 50–178 (SMVEVLADHP…TVDGPREPRR (129 aa)) form the Runt domain. The segment at 80–84 (RCNKT) is interaction with DNA. Residues Asn112, Glu116, Arg139, and Val170 each coordinate chloride. Interaction with DNA regions lie at residues 135–143 (RFVGRSGRG) and 168–177 (ITVDGPREPR). 2 disordered regions span residues 170–195 (VDGPREPRRHRQKLDDQTKPGSLSFS) and 209–252 (MRVS…SPPW). 2 positions are modified to phosphoserine: Ser193 and Ser212. Residues 222-247 (PRASLNHSTAFNPQPQSQMQDARQIQ) are compositionally biased toward polar residues. A Phosphoserine; by HIPK2 modification is found at Ser249. 2 positions are modified to phosphoserine: Ser266 and Ser267. Thr272 carries the post-translational modification Phosphothreonine; by HIPK2. A Phosphoserine; by HIPK2 modification is found at Ser275. The tract at residues 290–369 (SSRLSTAPDL…SQAQAGPFQT (80 aa)) is interaction with KAT6A. Residue Thr295 is modified to Phosphothreonine. An interaction with KAT6B region spans residues 306–398 (RQFPTLPSIS…MVGGERSPPR (93 aa)). Residues 360–400 (SQAQAGPFQTGSPSYHLYYGTSAGSYQFSMVGGERSPPRIL) are interaction with FOXP3. The tract at residues 410–450 (AALLNPSLPSQSDVVETEGSHSNSPTNMPPARLEEAVWRPY) is disordered. Residues 416-435 (SLPSQSDVVETEGSHSNSPT) show a composition bias toward polar residues. Phosphoserine is present on Ser433. The segment covering 441–450 (RLEEAVWRPY) has biased composition (basic and acidic residues).

Heterodimer with CBFB. RUNX1 binds DNA as a monomer and through the Runt domain. DNA-binding is increased by heterodimerization. Interacts with TLE1 and ALYREF/THOC4. Interacts with ELF1, ELF2 and SPI1. Interacts via its Runt domain with the ELF4 N-terminal region. Interaction with ELF2 isoform 2 (NERF-1a) may act to repress RUNX1-mediated transactivation. Interacts with KAT6A and KAT6B. Interacts with SUV39H1, leading to abrogation of transactivating and DNA-binding properties of RUNX1. Interacts with YAP1 and HIPK2. Interaction with CDK6 prevents myeloid differentiation, reducing its transcription transactivation activity. Found in a complex with PRMT5, RUNX1 and CBFB. Interacts with FOXP3. Interacts with TBX21. Interacts with DPF2. Post-translationally, phosphorylated in its C-terminus upon IL-6 treatment. Phosphorylation enhances interaction with KAT6A. In terms of processing, methylated. Phosphorylated in Ser-249 Thr-272 and Ser-275 by HIPK2 when associated with CBFB and DNA. This phosphorylation promotes subsequent EP300 phosphorylation. Expressed in skeletal muscle.

It is found in the nucleus. Its function is as follows. CBF binds to the core site, 5'-PYGPYGGT-3', of a number of enhancers and promoters, including murine leukemia virus, polyomavirus enhancer, T-cell receptor enhancers, LCK, IL-3 and GM-CSF promoters. The alpha subunit binds DNA and appears to have a role in the development of normal hematopoiesis. Isoform AML-1L interferes with the transactivation activity of RUNX1. Acts synergistically with ELF4 to transactivate the IL-3 promoter and with ELF2 to transactivate the BLK promoter. Inhibits KAT6B-dependent transcriptional activation. Controls the anergy and suppressive function of regulatory T-cells (Treg) by associating with FOXP3. Activates the expression of IL2 and IFNG and down-regulates the expression of TNFRSF18, IL2RA and CTLA4, in conventional T-cells. Positively regulates the expression of RORC in T-helper 17 cells. This is Runt-related transcription factor 1 (Runx1) from Rattus norvegicus (Rat).